The chain runs to 3140 residues: MSTIVFGSFTCHLDAAIHQDNADRLAKAWTRPENRQVSNVHLLCRRAAKSLINTYESATASAWKGLEEKLQPMFAKREFSKTVTKRKGLRCFKESSEKFIEKKLKKQYKEERERFQFLNGPDAIVNQISVDKCEASVWVPFPHIIEKPSFTTPSMKKKVVFTKVRMSEASLQLFMRRVAANAKANGQKVEIIGRKRVVGHYTTKSRLTYFRTHVRHLDGSKPRYDLVLDEATKKILQLFANTSGFHHVHKKGEITPGMSGFVVNPMNLSDPMHVYDTDLFIVRGKHNSILVDSRCKVSKEQSNEIVHYSDPGKQFWDGFTNSFMQCKLRETDHQCTSDLDVKECGYVAALVCQAIIPCGKITCLQCAQKYSYMSQQEIRDRFSTVIEQHEKTVMDNYPQFSHVLAFLKRYRELMRVENQNYEAFKDITHMIGERKEAPFSHLNKINELIIKGGMMSAQDYIEASDHLRELARYQKNRTENIRSGSIKAFRNKISSKAHVNMQLMCDNQLDTNGNFVWGQREYHAKRFFRNYFDVIDVSEGYRRHIVRENPRGIRKLAIGNLVMSTNLAALRKQLLGEECIHFEVSKECTSKRGENFVYQCCCVTHEDGTPLESEIISPTKNHLVVGNSGDSKYVDLPTAKGGAMFIAKAGYCYINIFLAMLININEDEAKSFTKTVRDTIVPKLGTWPSMMDLATACHFLAVLYPETRNAELPRILVDHEAKIFHVVDSFGSLSTGMHVLKANTINQLISFASDTLDSSMKTYLVGGLEVDKCDEFKNVKLLIRSIYKPQIMEQVLKEEPYLLLMSVLSPGVLMALFNSGSLEKATQYWIARSHSLAAITAMLSALAAKVSLASTLNAQMSVIDEHAAVLCDSVFVGTKPYASYMMAVKTLERMKARTESDHTLNDLGFSVLRQATPHLVEKSYLQELEQAWRELSWSERFSAILESQRWRKHIPKPFIPKDAADLGGRYDISVRSLLGSQYKRLKDVVRRKRDDVVCYTHQSMGKLFCKAIGISTSFLPSTLKMFDMLIIFGLLLSIGATCNSMINEHKHLKQVAADREDKKRFKRLQVLYTRLLEKIGCTPTADEFLEYVQGENPDLSKYAEDLIGDGQVVVHQSKRDSQANLERVAAFVALVMMLFDSERSDGVYKILNKLKGVMGSIDQTVHHQNLDDIEDMLDEKKLTVDFVLQSNEVAPTVPFDSTFEKWWTNQLETGNVIPHYRTEGHFLEFTRENAAHIANEVMHGSHQDILIRGAVGSGKSTGLPFHLSKKGHVLLIEPTRPLAENVCKQLRGQPFNVNPTLRMRGMSTFGSTPITVMTSGYALHFLANNPTYLDNYKCIIFDECHVHDASAMAFRCLLSEYSYPGKILKVSATPPGYEVDFKTQKEVKVIVEEALSFQQFVSNLGTGCNSDILKHGVNVLVYVASYNEVDTLSKLLTDRSFKVSKVDGRTMKVGNVEIPTSGTQAKPHFVVATNIIENGVTLDIDVVVDFGLKVVPILDIDNRLVRYTKKSISYGERIQRLGRVGRNKPGMALRIGFTEKGLTQIPPIIATEAAFLCFTYGLPVMTNGVSTSLLAMCTVKQARTMQQFELSPFYTVALVRFDGTMHQEIFRLLKSYRLRDSEVILNKLAIPNSNVCGWMSVRDYKRQGCNLDLDENIRVPFYVKDIPETLHDKVWQAVETHKSDAGFGRICSSSACKIAYTLQTDIHSIPRTVKIIDALLEQERTKQAHFRAMTSQSCSSSNFSLSSITSAIRSKYAKDHTEENIGVLQMAKSQLLEFKNLNIDPSYPELVRNFGALECVHHQTKEGVSKTLQLKGHWNKRLITRDATLMLGVLGGGAWMIFTYLKDSFQEEVVHQGFNRRQRQKLKFRQARDNRMAREVYGDDSTMEDYFGSAYSKKGKSKGKTRGMGTKTRKFVNMYGYDPTDYNFVRFVDPLTGHTLDENPLMDINLVQEHFSQIRNDYIGDDKITMQHIMSNPGIVAYYIKDATQKALKVDLTPHNPLRVCDKTATIAGFPEREFELRQTGHPTFVEPNAIPKINEVGQEEVDHESKSLFRGLRDYNPIASSICQLNNSSGTRHSEMFGLGFGGLIVTNQHLFKRNDGELTIRSHHGEFVVKDTKTLKLLPCKGRDILIIRLPKDFPPFPKRLQFRTPTTEDRVCLIGSNFQTKSISSTMSETSATYSVDNSHFWKHWISTKDGHCGLPIVSTRDGSILGLHSLANSTNTQNFYAAFPDNFETTYLSNQDNDNWIKQWRYNPDEVCWGSLELKRDIPQMPFTVCKLLTDLDREFVYNQSKTTHWLRDKLEGNLKAVGACPGQLVTKHVVKGKCTLFETYLLTHPEEHEFFRPLMGAYQKSALNKDEYVKDLMKYSKPIVVGAVDCEQFERALDVVISMLISKGFEECNYVTDPDDIFSALNMKAAVGALYSGKKRDYFKNASEQDKEDFIKASCKRLFMGKKGVWNGSLKAELRPKEKVEANKTRSFTAAPIDTLLGGKVCVDDFNNQFYSLNLHCPWSVGMTKFRGGWDKLLRALPDGWIYCDADGSQFDSSLSPYLINAVLNIRLAFMEEWDIGEQMLSNLYTEIVYTPIATPDGTIVKKFKGNNSGQPSTVVDNTLMVILAMTYSLLKLGYHPDTHECICRYFVNGDDLVLAVHPAYESMYDELQEHFSQLGLNYTFTTKTENKEELWFMSHRGVLFEDMYIPKLEPERIVSILEWDRSNEPIHRLEAICASMVEAWGYKELLREIRKFYSWVLEQAPYNALSKDGKAPYIAETALRKLYTDSEASETEIERYLEAFYNDVDDSLDSNIVIHQADEEEDDEEVDAGRPTVVTAPAATVATTQPAPVIQPAPQTTAPMFNPIFTPATTQPAVRPVPPISGAKPRSFGVYGNEDASPSTSNTLVNTGRDRDVDAGSIGTFAVPRLKTMTSKLSLPKVKGKAIMNLNHLAHYSPAQVDLSNTRAPQSCFQTWYEGVKRDYDVTDEEMSIILNGLMVWCIENGTSPNINGMWVMMDGETQVEYPIKPLLDHAKPTFRQIMAHFSNVAEAYIEKRNYEKAYMPRYGIQRNLTDYSLARYAFDFYEMTSTTPVRAREAHIQMKAAALRNVQNRLFGLDGNVGTQEEDTERHTAGDVNRNMHNLLGVRGV.

The Peptidase S30 domain occupies 165–308 (RMSEASLQLF…KEQSNEIVHY (144 aa)). Residues histidine 216, aspartate 225, and serine 259 each act as for P1 proteinase activity in the active site. The Involved in interaction with stylet and aphid transmission motif lies at 360-363 (KITC). The short motif at 618-620 (PTK) is the Involved in virions binding and aphid transmission element. Residues 644–766 (MFIAKAGYCY…DSSMKTYLVG (123 aa)) form the Peptidase C6 domain. Catalysis depends on for helper component proteinase activity residues cysteine 652 and histidine 725. One can recognise a Helicase ATP-binding domain in the interval 1240–1392 (EVMHGSHQDI…TQKEVKVIVE (153 aa)). 1253–1260 (GAVGSGKS) serves as a coordination point for ATP. The DECH box signature appears at 1342–1345 (DECH). In terms of domain architecture, Helicase C-terminal spans 1411–1570 (DILKHGVNVL…GLPVMTNGVS (160 aa)). The Nuclear localization signal motif lies at 1897 to 1904 (KKGKSKGK). O-(5'-phospho-RNA)-tyrosine is present on tyrosine 1919. The region spanning 2050-2268 (SKSLFRGLRD…VCWGSLELKR (219 aa)) is the Peptidase C4 domain. Active-site for nuclear inclusion protein A activity residues include histidine 2095, aspartate 2130, and cysteine 2200. The RdRp catalytic domain occupies 2534–2658 (WIYCDADGSQ…AVHPAYESMY (125 aa)). A disordered region spans residues 2883-2905 (GVYGNEDASPSTSNTLVNTGRDR). A compositionally biased stretch (polar residues) spans 2890–2900 (ASPSTSNTLVN). 3 positions are modified to phosphoserine: serine 2891, serine 2911, and serine 2928. A phosphothreonine mark is found at threonine 3064 and threonine 3123.

It belongs to the potyviridae genome polyprotein family. As to quaternary structure, interacts with host eIF4E protein (via cap-binding region); this interaction mediates the translation of the VPg-viral RNA conjugates. Part of a complex that comprises VPg, RNA, host EIF4E and EIF4G; this interaction mediates the translation of the VPg-viral RNA conjugates. VPg is uridylylated by the polymerase and is covalently attached to the 5'-end of the genomic RNA. This uridylylated form acts as a nucleotide-peptide primer for the polymerase. In terms of processing, potyviral RNA is expressed as two polyproteins which undergo post-translational proteolytic processing. Genome polyprotein is processed by NIa-pro, P1 and HC-pro proteinases resulting in the production of at least ten individual proteins. P3N-PIPO polyprotein is cleaved by P1 and HC-pro proteinases resulting in the production of three individual proteins. The P1 proteinase and the HC-pro cleave only their respective C-termini autocatalytically. 6K1 is essential for proper proteolytic separation of P3 from CI.

It localises to the host cytoplasmic vesicle. The protein localises to the host nucleus. The protein resides in the virion. It catalyses the reaction RNA(n) + a ribonucleoside 5'-triphosphate = RNA(n+1) + diphosphate. It carries out the reaction Hydrolyzes glutaminyl bonds, and activity is further restricted by preferences for the amino acids in P6 - P1' that vary with the species of potyvirus, e.g. Glu-Xaa-Xaa-Tyr-Xaa-Gln-|-(Ser or Gly) for the enzyme from tobacco etch virus. The natural substrate is the viral polyprotein, but other proteins and oligopeptides containing the appropriate consensus sequence are also cleaved.. The enzyme catalyses Hydrolyzes a Gly-|-Gly bond at its own C-terminus, commonly in the sequence -Tyr-Xaa-Val-Gly-|-Gly, in the processing of the potyviral polyprotein.. Functionally, required for aphid transmission and also has proteolytic activity. Only cleaves a Gly-Gly dipeptide at its own C-terminus. Interacts with virions and aphid stylets. Acts as a suppressor of RNA-mediated gene silencing, also known as post-transcriptional gene silencing (PTGS), a mechanism of plant viral defense that limits the accumulation of viral RNAs. May have RNA-binding activity. In terms of biological role, has helicase activity. It may be involved in replication. Indispensable for virus replication. Reduces the abundance of host transcripts related to jasmonic acid biosynthesis therefore altering the host defenses. In order to increase its own stability, decreases host protein degradation pathways. Its function is as follows. Indispensable for virus replication. Functionally, mediates the cap-independent, EIF4E-dependent translation of viral genomic RNAs. Binds to the cap-binding site of host EIF4E and thus interferes with the host EIF4E-dependent mRNA export and translation. VPg-RNA directly binds EIF4E and is a template for transcription. Also forms trimeric complexes with EIF4E-EIF4G, which are templates for translation. In terms of biological role, has RNA-binding and proteolytic activities. An RNA-dependent RNA polymerase that plays an essential role in the virus replication. Its function is as follows. Involved in aphid transmission, cell-to-cell and systemis movement, encapsidation of the viral RNA and in the regulation of viral RNA amplification. In Prunus armeniaca (Apricot), this protein is Genome polyprotein.